The following is a 111-amino-acid chain: Aspartate 1-decarboxylase (111 aa).

Catalysis depends on Ser-25, which acts as the Schiff-base intermediate with substrate; via pyruvic acid. Residue Ser-25 is modified to Pyruvic acid (Ser). Thr-57 is a binding site for substrate. Tyr-58 functions as the Proton donor in the catalytic mechanism. 73 to 75 (GPA) contacts substrate.

The protein belongs to the PanD family. In terms of assembly, heterooctamer of four alpha and four beta subunits. It depends on pyruvate as a cofactor. Post-translationally, is synthesized initially as an inactive proenzyme, which is activated by self-cleavage at a specific serine bond to produce a beta-subunit with a hydroxyl group at its C-terminus and an alpha-subunit with a pyruvoyl group at its N-terminus.

It localises to the cytoplasm. It carries out the reaction L-aspartate + H(+) = beta-alanine + CO2. The protein operates within cofactor biosynthesis; (R)-pantothenate biosynthesis; beta-alanine from L-aspartate: step 1/1. Catalyzes the pyruvoyl-dependent decarboxylation of aspartate to produce beta-alanine. This is Aspartate 1-decarboxylase from Coxiella burnetii (strain RSA 493 / Nine Mile phase I).